We begin with the raw amino-acid sequence, 177 residues long: Large ribosomal subunit protein uL6 (177 aa).

This sequence belongs to the universal ribosomal protein uL6 family. Part of the 50S ribosomal subunit.

Functionally, this protein binds to the 23S rRNA, and is important in its secondary structure. It is located near the subunit interface in the base of the L7/L12 stalk, and near the tRNA binding site of the peptidyltransferase center. In Shewanella baltica (strain OS223), this protein is Large ribosomal subunit protein uL6.